A 368-amino-acid chain; its full sequence is DNA-dependent metalloprotease dvc-1 (368 aa).

Positions 21-190 (HALFIQFDAR…QSCGGNFLKV (170 aa)) constitute a SprT-like domain. Residue His89 participates in Zn(2+) binding. Glu90 is a catalytic residue. Zn(2+) is bound by residues His93 and His108. Positions 187–309 (FLKVKEPEGY…PVNFTSPSSA (123 aa)) are disordered. The segment covering 226–237 (TLDDFFKKDGKN) has biased composition (basic and acidic residues). Low complexity predominate over residues 238–274 (SSDNSTSKSPTKPSTSLFTGSGQKLGGSSSTSSLLNS). The segment at 344-368 (SVICPSCNTEVMENLIHGHLDYCLG) adopts a UBZ4-type zinc-finger fold. 4 residues coordinate Zn(2+): Cys347, Cys350, His362, and Cys366.

The protein belongs to the Spartan family. Interacts with vcp/p97 (cdc-48.1 or cdc-48.2).

It localises to the nucleus. It is found in the chromosome. Functionally, DNA-dependent metalloendopeptidase that mediates the proteolytic cleavage of covalent DNA-protein cross-links (DPCs) during DNA synthesis, thereby playing a key role in maintaining genomic integrity. DPCs are highly toxic DNA lesions that interfere with essential chromatin transactions, such as replication and transcription, and which are induced by reactive agents, such as UV light or formaldehyde. Associates with the DNA replication machinery and specifically removes DPCs during DNA synthesis. Regulator of UV-induced DNA damage response: required to protect genome stability during DNA replication, possibly via recruitment of vcp/p97 (cdc-48.1 or cdc-48.2) recruitment. The protein is DNA-dependent metalloprotease dvc-1 of Caenorhabditis elegans.